Reading from the N-terminus, the 907-residue chain is Protein translocase subunit SecA (907 aa).

ATP contacts are provided by residues Gln87, 105–109 (GEGKT), and Asp512. The interval 834–907 (QEDVERMEEQ…KKYKQCHGKI (74 aa)) is disordered. Composition is skewed to basic and acidic residues over residues 836 to 853 (DVERMEEQRRLQAEEAAR) and 873 to 888 (EEAHSPMVREERKVGR). 4 residues coordinate Zn(2+): Cys892, Cys894, Cys903, and His904. Over residues 898-907 (KKYKQCHGKI) the composition is skewed to basic residues.

This sequence belongs to the SecA family. As to quaternary structure, monomer and homodimer. Part of the essential Sec protein translocation apparatus which comprises SecA, SecYEG and auxiliary proteins SecDF-YajC and YidC. Zn(2+) is required as a cofactor.

Its subcellular location is the cell inner membrane. The protein localises to the cytoplasm. The enzyme catalyses ATP + H2O + cellular proteinSide 1 = ADP + phosphate + cellular proteinSide 2.. Its function is as follows. Part of the Sec protein translocase complex. Interacts with the SecYEG preprotein conducting channel. Has a central role in coupling the hydrolysis of ATP to the transfer of proteins into and across the cell membrane, serving both as a receptor for the preprotein-SecB complex and as an ATP-driven molecular motor driving the stepwise translocation of polypeptide chains across the membrane. In Aliivibrio fischeri (strain MJ11) (Vibrio fischeri), this protein is Protein translocase subunit SecA.